The chain runs to 100 residues: Urease subunit gamma (100 aa).

This sequence belongs to the urease gamma subunit family. Heterotrimer of UreA (gamma), UreB (beta) and UreC (alpha) subunits. Three heterotrimers associate to form the active enzyme.

Its subcellular location is the cytoplasm. The catalysed reaction is urea + 2 H2O + H(+) = hydrogencarbonate + 2 NH4(+). The protein operates within nitrogen metabolism; urea degradation; CO(2) and NH(3) from urea (urease route): step 1/1. The protein is Urease subunit gamma of Staphylococcus aureus (strain N315).